Reading from the N-terminus, the 443-residue chain is Serine/threonine-protein kinase SSN3 (443 aa).

The interval 1-24 (MERKRGREMNPPSADPPSATPVAR) is disordered. The Protein kinase domain occupies 54 to 384 (YKIVGFISSG…AEKALEHRYF (331 aa)). ATP-binding positions include 60–68 (ISSGTYGRV) and Lys84. The Proton acceptor role is filled by Asp185. The segment at 405 to 443 (RRVSQEDNDIRTSSLPGTKRSGLPDDSLMGRPAKRLKEG) is disordered.

Belongs to the protein kinase superfamily. CMGC Ser/Thr protein kinase family. CDC2/CDKX subfamily. In terms of assembly, component of the srb8-11 complex, a regulatory module of the Mediator complex. Requires Mg(2+) as cofactor.

Its subcellular location is the nucleus. The catalysed reaction is L-seryl-[protein] + ATP = O-phospho-L-seryl-[protein] + ADP + H(+). The enzyme catalyses L-threonyl-[protein] + ATP = O-phospho-L-threonyl-[protein] + ADP + H(+). It carries out the reaction [DNA-directed RNA polymerase] + ATP = phospho-[DNA-directed RNA polymerase] + ADP + H(+). In terms of biological role, component of the srb8-11 complex. The srb8-11 complex is a regulatory module of the Mediator complex which is itself dependent transcription. The srb8-11 complex may be involved in the transcriptional repression of a subset of genes regulated by Mediator. It may inhibit the association of the Mediator complex with RNA polymerase II to form the holoenzyme complex. The srb8-11 complex phosphorylates the C-terminal domain (CTD) of the largest subunit of RNA polymerase II. This chain is Serine/threonine-protein kinase SSN3 (SSN3), found in Phaeosphaeria nodorum (strain SN15 / ATCC MYA-4574 / FGSC 10173) (Glume blotch fungus).